Here is a 376-residue protein sequence, read N- to C-terminus: MKHNIIELAQQLIRNPSISPQDKGCQQIISQRLAAVGFTLEWMPFGDTLNLWATHGNGDPCIVFAGHTDIVPTGDPAQWQYPPFSAIIVDEMLHGRGAADMKGSLAALVIAAENFVRKYPNHSGKIALLITSDEEATAKDGTAKVVETLMARHEKIDYAVIGEPSCSKYLGDIIKNGRRGSITAELYIEGVQGHVAYPHLAQNPIHTSLAFLNELTTYQWDNGNTFFPPTSLQIANIKAGTGNNNVIPGELYLQFNLRYCTEINDQIIKQTVATMLAKYGLQYRIHWHLSGKPFLSSEGKLVNATIQAVENITKHTPRLDTSGGTSDGRFIALMGAEVVEFGPLNATIHKVNECVSTEDLAKCGQIYYQILEQLLT.

His67 contributes to the Zn(2+) binding site. Asp69 is an active-site residue. Position 100 (Asp100) interacts with Zn(2+). Residue Glu134 is the Proton acceptor of the active site. Residues Glu135, Glu163, and His349 each coordinate Zn(2+).

It belongs to the peptidase M20A family. DapE subfamily. In terms of assembly, homodimer. The cofactor is Zn(2+). Co(2+) is required as a cofactor.

It catalyses the reaction N-succinyl-(2S,6S)-2,6-diaminopimelate + H2O = (2S,6S)-2,6-diaminopimelate + succinate. The protein operates within amino-acid biosynthesis; L-lysine biosynthesis via DAP pathway; LL-2,6-diaminopimelate from (S)-tetrahydrodipicolinate (succinylase route): step 3/3. Catalyzes the hydrolysis of N-succinyl-L,L-diaminopimelic acid (SDAP), forming succinate and LL-2,6-diaminopimelate (DAP), an intermediate involved in the bacterial biosynthesis of lysine and meso-diaminopimelic acid, an essential component of bacterial cell walls. In Haemophilus ducreyi (strain 35000HP / ATCC 700724), this protein is Succinyl-diaminopimelate desuccinylase.